We begin with the raw amino-acid sequence, 308 residues long: Elongation factor Ts (308 aa).

The tract at residues 80–83 is involved in Mg(2+) ion dislocation from EF-Tu; it reads TDFV.

It belongs to the EF-Ts family.

It is found in the cytoplasm. Associates with the EF-Tu.GDP complex and induces the exchange of GDP to GTP. It remains bound to the aminoacyl-tRNA.EF-Tu.GTP complex up to the GTP hydrolysis stage on the ribosome. In Rhizobium etli (strain ATCC 51251 / DSM 11541 / JCM 21823 / NBRC 15573 / CFN 42), this protein is Elongation factor Ts.